The sequence spans 495 residues: MSDRPTPARTRFAPSPTGYLHIGSLRTVLFSWLWARHTGGQFLLRIEDTDRKRFVEGAEEQLTSSLQAIGLMWDEGPIVGGPHAPYKQSERLEIYQAHAQALIDKGVAYRSYATADEIAAINAEREARGEPKLLVFRNLPGIDDAAREAAGADYNVRLSLKTTGQTVVQDLVRGQIVFDNAALKMPDPVLLKTDGFPTYALAAMVDDHLMGITHVLRADEWIPTWPIHHQIYEAFGWEQPVWVHVPQVLGSDGKKLSKRHGDTSVTEYIDLGFVPEAIINYLALIGWSYDDKTEFMTLEELIERFDLNRIRPSGGVFDRDKLLHFNGVYLRNMAPAELAQRVAPYLSKAGLISAEPTAAELAKITEYLPLVQDRLKLLSEAPELLDFFFVDPQGYDPALLVPKKGDPAQTVEILGQVKASFEAVETWDAPSLDKLLHDFVNQLGLKIPQVFMPIRVAISGRTTSPGLFETLAVLGKAVTLARISTAAAALSSASV.

The 'HIGH' region signature appears at 14 to 24; sequence PSPTGYLHIGS. Residues 255 to 259 carry the 'KMSKS' region motif; sequence KLSKR. Lysine 258 provides a ligand contact to ATP.

It belongs to the class-I aminoacyl-tRNA synthetase family. Glutamate--tRNA ligase type 1 subfamily. Monomer.

The protein localises to the cytoplasm. The catalysed reaction is tRNA(Glu) + L-glutamate + ATP = L-glutamyl-tRNA(Glu) + AMP + diphosphate. Catalyzes the attachment of glutamate to tRNA(Glu) in a two-step reaction: glutamate is first activated by ATP to form Glu-AMP and then transferred to the acceptor end of tRNA(Glu). This Herpetosiphon aurantiacus (strain ATCC 23779 / DSM 785 / 114-95) protein is Glutamate--tRNA ligase.